The following is a 905-amino-acid chain: Protein translocase subunit SecA (905 aa).

ATP contacts are provided by residues Q89, 107 to 111 (GEGKT), and D502. Zn(2+) is bound by residues C887, C889, C898, and H899.

The protein belongs to the SecA family. As to quaternary structure, monomer and homodimer. Part of the essential Sec protein translocation apparatus which comprises SecA, SecYEG and auxiliary proteins SecDF-YajC and YidC. It depends on Zn(2+) as a cofactor.

Its subcellular location is the cell inner membrane. It is found in the cytoplasm. The catalysed reaction is ATP + H2O + cellular proteinSide 1 = ADP + phosphate + cellular proteinSide 2.. Part of the Sec protein translocase complex. Interacts with the SecYEG preprotein conducting channel. Has a central role in coupling the hydrolysis of ATP to the transfer of proteins into and across the cell membrane, serving both as a receptor for the preprotein-SecB complex and as an ATP-driven molecular motor driving the stepwise translocation of polypeptide chains across the membrane. The polypeptide is Protein translocase subunit SecA (Rhizobium leguminosarum bv. trifolii (strain WSM2304)).